We begin with the raw amino-acid sequence, 61 residues long: Double gene block protein 1 (61 aa).

Residues 15–45 (LAGNRGKQKTRRSVAKDAIRKPASDSTNGGN) are disordered. The interval 17–35 (GNRGKQKTRRSVAKDAIRK) is RNA-binding. The span at 28–37 (VAKDAIRKPA) shows a compositional bias: basic and acidic residues.

It belongs to the carmovirus double gene block protein 1 family. As to quaternary structure, homodimer.

Functionally, cell-to-cell movement. Displays RNA-binding activity. The polypeptide is Double gene block protein 1 (Carnation mottle virus (isolate China/Shanghai) (CarMV)).